Here is a 583-residue protein sequence, read N- to C-terminus: Extracellular serine/threonine protein kinase four-jointed (583 aa).

Residues 1 to 78 (MYDIKRLEAG…RRRSLQRRAC (78 aa)) lie on the Cytoplasmic side of the membrane. The chain crosses the membrane as a helical; Signal-anchor for type II membrane protein span at residues 79 to 99 (LLSILAAFVFGMALGVVVPMF). At 100–583 (GLPRHQDSPP…LGQVQKCQGS (484 aa)) the chain is on the extracellular side. The interval 179–222 (RTASGRYRKGPERRLSKKMPERVQPQETSRSPTTSPTNPTSEHQ) is disordered. Residues 187-199 (KGPERRLSKKMPE) are compositionally biased toward basic and acidic residues. Over residues 206 to 219 (TSRSPTTSPTNPTS) the composition is skewed to low complexity. Residues Asn-310 and Asn-379 are each glycosylated (N-linked (GlcNAc...) asparagine). Residues 384-421 (MQSERQAQSQPHGLLKRLGAASSPGSAHQSNAIEETGT) are disordered. N-linked (GlcNAc...) asparagine glycosylation is present at Asn-491.

It belongs to the FJX1/FJ family. Proteolytically cleaved to yield a secreted protein. In the eye disk, expressed in a gradient ahead of the morphogenetic furrow, high at the equator and low at the poles of the eye. In the leg disk, expressed in concentric rings, possibly corresponding to segmental boundaries. In the wing disk, expression is localized in the wing pouch; low in peripheral regions and high towards the center.

It is found in the golgi apparatus membrane. The protein localises to the secreted. The enzyme catalyses L-seryl-[protein] + ATP = O-phospho-L-seryl-[protein] + ADP + H(+). It carries out the reaction L-threonyl-[protein] + ATP = O-phospho-L-threonyl-[protein] + ADP + H(+). Functionally, golgi serine/threonine protein kinase required for intermediate growth in the proximal-distal axis. Phosphorylates specific residues within extracellular cadherin domains of Fat (ft) and Dachsous (ds) as they transit through the Golgi. Acts in ommatidial polarity determination as a secondary signal downstream of Notch, JAK/STAT and wingless. Also necessary for the initiation, up-regulation or maintenance of Notch ligand, Serrate (Ser) expression in legs, thereby participating in a feedback loop with N signaling. Sufficient for joint formation and growth in the leg. This chain is Extracellular serine/threonine protein kinase four-jointed, found in Drosophila melanogaster (Fruit fly).